A 488-amino-acid polypeptide reads, in one-letter code: MSLSTVNHAAAAAAAAAGPGKSFSAAAPAAPSVRLPRTRAPAAAAVSAAAVGADRAADRVSALSQVSGVLGSQWGDEGKGKLVDVLAPRFDIVARCQGGANAGHTIYNSEGKKFALHLVPSGILHEGTLCVVGNGAVIHVPGFFNEIDGLESNGVNCNGRILVSDRAHLLFDLHQAVDGLREAELANSFIGTTKRGIGPCYSSKVTRNGLRVCDLRHMDTFGDKLDVLFKDATSRFEGFEYSKSMLREEVERYKRFAERLEPFIADTVHLLNESIQQKKKILVEGGQATMLDIDFGTYPFVTSSSPSAGGICTGLGIAPRCIGDLIGVVKAYTTRVGSGPFPTELFGEEGDLLRKSGMEFGTTTGRPRRCGWLDIVALKYCCEINGFSSLNLTKLDVLSGLPEVKLGVSYNQPDGQKLQSFPGDLDTLEQVQVKYEVLPGWQSDISSVRSYSELPLAAQRYVERIEELVGVPVHYIGVGPGRDALIYK.

The transit peptide at 1 to 47 (MSLSTVNHAAAAAAAAAGPGKSFSAAAPAAPSVRLPRTRAPAAAAVS) directs the protein to the chloroplast. GTP-binding positions include 75–81 (GDEGKGK) and 103–105 (GHT). The active-site Proton acceptor is D76. Mg(2+)-binding residues include D76 and G103. IMP is bound by residues 76 to 79 (DEGK), 101 to 104 (NAGH), T193, R207, Q287, T302, and R366. The active-site Proton donor is H104. 362-368 (TTTGRPR) is a binding site for substrate. GTP-binding positions include R368, 394–396 (KLD), and 477–479 (GVG).

It belongs to the adenylosuccinate synthetase family. Homodimer. The cofactor is Mg(2+).

Its subcellular location is the plastid. The protein localises to the chloroplast. It carries out the reaction IMP + L-aspartate + GTP = N(6)-(1,2-dicarboxyethyl)-AMP + GDP + phosphate + 2 H(+). It participates in purine metabolism; AMP biosynthesis via de novo pathway; AMP from IMP: step 1/2. Its function is as follows. Plays an important role in the de novo pathway and in the salvage pathway of purine nucleotide biosynthesis. Catalyzes the first committed step in the biosynthesis of AMP from IMP. This chain is Adenylosuccinate synthetase 1, chloroplastic, found in Oryza sativa subsp. japonica (Rice).